Here is a 122-residue protein sequence, read N- to C-terminus: Large ribosomal subunit protein bL12 (122 aa).

This sequence belongs to the bacterial ribosomal protein bL12 family. As to quaternary structure, homodimer. Part of the ribosomal stalk of the 50S ribosomal subunit. Forms a multimeric L10(L12)X complex, where L10 forms an elongated spine to which 2 to 4 L12 dimers bind in a sequential fashion. Binds GTP-bound translation factors.

Forms part of the ribosomal stalk which helps the ribosome interact with GTP-bound translation factors. Is thus essential for accurate translation. The sequence is that of Large ribosomal subunit protein bL12 from Xanthomonas oryzae pv. oryzae (strain MAFF 311018).